The primary structure comprises 473 residues: ATP synthase subunit beta (473 aa).

An ATP-binding site is contributed by 158–165 (GGAGVGKT).

This sequence belongs to the ATPase alpha/beta chains family. In terms of assembly, F-type ATPases have 2 components, CF(1) - the catalytic core - and CF(0) - the membrane proton channel. CF(1) has five subunits: alpha(3), beta(3), gamma(1), delta(1), epsilon(1). CF(0) has three main subunits: a(1), b(2) and c(9-12). The alpha and beta chains form an alternating ring which encloses part of the gamma chain. CF(1) is attached to CF(0) by a central stalk formed by the gamma and epsilon chains, while a peripheral stalk is formed by the delta and b chains.

The protein resides in the cell membrane. The catalysed reaction is ATP + H2O + 4 H(+)(in) = ADP + phosphate + 5 H(+)(out). Produces ATP from ADP in the presence of a proton gradient across the membrane. The catalytic sites are hosted primarily by the beta subunits. In Geobacillus stearothermophilus (Bacillus stearothermophilus), this protein is ATP synthase subunit beta.